Here is an 84-residue protein sequence, read N- to C-terminus: N.vectensis toxin 5 (84 aa).

The first 21 residues, 1-21 (MNSLLKVAVVCLVMLVACSSG), serve as a signal peptide directing secretion. 3 disulfides stabilise this stretch: cysteine 45–cysteine 77, cysteine 47–cysteine 68, and cysteine 61–cysteine 78.

In terms of tissue distribution, expressed in ectodermal gland cells. In adult female tissues, highly transcribed in mesenteries (gametes-producing tissue) and slightly transcribed in tentacles, pharynx and physa.

Functionally, has toxic effects on zebrafish larvae. It causes contractile paralysis and twitching of the tail within 20 minutes, followed by death within 30 minutes. Does not show any toxicity when injected into arthropods (cherry shrimps or grass shrimps). The sequence is that of N.vectensis toxin 5 from Nematostella vectensis (Starlet sea anemone).